Here is a 375-residue protein sequence, read N- to C-terminus: uncharacterized protein (375 aa).

The N-terminal stretch at 1 to 20 (MKNKLFIILIIFIILKIVIC) is a signal peptide. The Extracellular portion of the chain corresponds to 21–335 (QNTTPSKLIP…EKQVERKITP (315 aa)). Low complexity predominate over residues 30–42 (PQQQQKQKQQQTQ). 2 disordered regions span residues 30 to 74 (PQQQ…QPQQ) and 113 to 253 (SQNV…PHNH). A compositionally biased stretch (basic residues) spans 43–53 (PHHHHHHHQQH). The segment covering 54-74 (QQHQQQHQPNQQIKQQQQPQQ) has biased composition (low complexity). The segment covering 120–151 (PPHHTQQRVPHHHGPNGAPHHHGPNGAPHHHG) has biased composition (basic residues). Over residues 168 to 180 (GHNTQGHVQTNHV) the composition is skewed to polar residues. Positions 181-220 (NNINKNNINNNNNNNNNNNNNNNNNNNNNINDNKNIRNNI) are enriched in low complexity. Residues 336–356 (IMVLYILLASTMVIQLFIMVF) traverse the membrane as a helical segment. The Cytoplasmic portion of the chain corresponds to 357–375 (KQVKHIREINAKTTMESLL).

It is found in the membrane. This is an uncharacterized protein from Dictyostelium discoideum (Social amoeba).